A 144-amino-acid polypeptide reads, in one-letter code: SVVKSEDFTLPAYVDRRDYPLPDVAHVKHLSASQKALKEKEKASWSSLSMDEKVELYRIKFKESFAEMNRRSNEWKTVVGTAMFFFGITALIVMWEKRYVYGPLPQTFDKEWVAMQTKRMLDMKVNPIQGLASKWDYEKNEWKK.

The Mitochondrial matrix portion of the chain corresponds to 1 to 73 (SVVKSEDFTL…SFAEMNRRSN (73 aa)). At K4 the chain carries N6-acetyllysine; alternate. Position 4 is an N6-succinyllysine; alternate (K4). K28 bears the N6-acetyllysine mark. 2 positions are modified to phosphoserine: S31 and S33. At K35 the chain carries N6-acetyllysine; alternate. At K35 the chain carries N6-succinyllysine; alternate. Position 42 is an N6-acetyllysine (K42). The helical transmembrane segment at 74 to 99 (EWKTVVGTAMFFFGITALIVMWEKRY) threads the bilayer. Topologically, residues 100-144 (VYGPLPQTFDKEWVAMQTKRMLDMKVNPIQGLASKWDYEKNEWKK) are mitochondrial intermembrane.

Belongs to the cytochrome c oxidase IV family. As to quaternary structure, component of the cytochrome c oxidase (complex IV, CIV), a multisubunit enzyme composed of 14 subunits. The complex is composed of a catalytic core of 3 subunits MT-CO1, MT-CO2 and MT-CO3, encoded in the mitochondrial DNA, and 11 supernumerary subunits COX4I, COX5A, COX5B, COX6A, COX6B, COX6C, COX7A, COX7B, COX7C, COX8 and NDUFA4, which are encoded in the nuclear genome. The complex exists as a monomer or a dimer and forms supercomplexes (SCs) in the inner mitochondrial membrane with NADH-ubiquinone oxidoreductase (complex I, CI) and ubiquinol-cytochrome c oxidoreductase (cytochrome b-c1 complex, complex III, CIII), resulting in different assemblies (supercomplex SCI(1)III(2)IV(1) and megacomplex MCI(2)III(2)IV(2)). Interacts with PHB2; the interaction decreases in absence of SPHK2. Interacts with AFG1L. Interacts with ABCB7; this interaction allows the regulation of cellular iron homeostasis and cellular reactive oxygen species (ROS) levels in cardiomyocytes. Interacts with FLVCR2; this interaction occurs in the absence of heme and is disrupted upon heme binding. Interacts with IRGC.

Its subcellular location is the mitochondrion inner membrane. Its pathway is energy metabolism; oxidative phosphorylation. In terms of biological role, component of the cytochrome c oxidase, the last enzyme in the mitochondrial electron transport chain which drives oxidative phosphorylation. The respiratory chain contains 3 multisubunit complexes succinate dehydrogenase (complex II, CII), ubiquinol-cytochrome c oxidoreductase (cytochrome b-c1 complex, complex III, CIII) and cytochrome c oxidase (complex IV, CIV), that cooperate to transfer electrons derived from NADH and succinate to molecular oxygen, creating an electrochemical gradient over the inner membrane that drives transmembrane transport and the ATP synthase. Cytochrome c oxidase is the component of the respiratory chain that catalyzes the reduction of oxygen to water. Electrons originating from reduced cytochrome c in the intermembrane space (IMS) are transferred via the dinuclear copper A center (CU(A)) of subunit 2 and heme A of subunit 1 to the active site in subunit 1, a binuclear center (BNC) formed by heme A3 and copper B (CU(B)). The BNC reduces molecular oxygen to 2 water molecules using 4 electrons from cytochrome c in the IMS and 4 protons from the mitochondrial matrix. This is Cytochrome c oxidase subunit 4 isoform 1, mitochondrial (COX4I1) from Theropithecus gelada (Gelada baboon).